The following is a 346-amino-acid chain: Probable choline kinase 1 (346 aa).

Residues arginine 73, glutamine 210, and aspartate 227 each contribute to the ATP site.

This sequence belongs to the choline/ethanolamine kinase family. Expressed in roots. Expressed at low levels in cauline leaves and flowers.

The catalysed reaction is choline + ATP = phosphocholine + ADP + H(+). The protein operates within phospholipid metabolism; phosphatidylcholine biosynthesis; phosphocholine from choline: step 1/1. Its function is as follows. Involved in phospholipid biosynthesis. Catalyzes the first step in phosphatidylcholine biosynthesis. In Arabidopsis thaliana (Mouse-ear cress), this protein is Probable choline kinase 1 (CK1).